The primary structure comprises 636 residues: p-hydroxybenzoate-m-hydroxylase (636 aa).

FAD-binding positions include 11-40 (DIVI…HIDN), 242-244 (RLY), Tyr-290, and Asp-311. Residues 12 to 33 (IVIVGAGPVGILLSLCMSRWGY) form a helical membrane-spanning segment. Asn-573 carries an N-linked (GlcNAc...) asparagine glycan.

The protein belongs to the PheA/TfdB FAD monooxygenase family. It depends on FAD as a cofactor.

The protein resides in the membrane. It carries out the reaction 4-hydroxybenzoate + NADH + O2 + H(+) = 3,4-dihydroxybenzoate + NAD(+) + H2O. The catalysed reaction is 4-hydroxybenzoate + NADPH + O2 + H(+) = 3,4-dihydroxybenzoate + NADP(+) + H2O. FAD-dependent monooxygenase; part of the benzoic acid degradation pathway also known as the protocatechuic acid pathway. Benzoic acid debradation begins with the conversion of benzoic acid into 4-hydroxybenzoic acid through hydroxylation by the benzoate-4-monooxygenase bphA, and its partner NADPH-cytochrome P450 reductase cprA which act as a mediator in electron donation from NADPH. 4-Hydroxybenzoic acid is then converted into 3,4-dihydroxybenzoic acid (also called protocatechuic acid) by the p-hydroxybenzoate-m-hydroxylase phhA. Protocatechuic acid is converted into 3-carboxy-cis,cis-muconic acid by the intradiol ring-cleavage dioxygenase prcA, which is further metabolized through the 3-oxoadipate pathway to finally enter the tricarboxylic acid cycle (TCA). This is p-hydroxybenzoate-m-hydroxylase from Emericella nidulans (strain FGSC A4 / ATCC 38163 / CBS 112.46 / NRRL 194 / M139) (Aspergillus nidulans).